The chain runs to 630 residues: Probable potassium transport system protein Kup (630 aa).

A run of 12 helical transmembrane segments spans residues 19-39 (GLIG…LYAV), 59-79 (LLSL…VLLI), 108-128 (WIIG…ATIT), 145-165 (PGLK…LFFV), 173-193 (VGGA…ALGL), 220-240 (LLAF…EALY), 255-275 (WLFF…ALVI), 284-304 (PFFF…ATIA), 345-365 (IYVP…VLGF), 374-394 (AYGI…AFVY), 405-425 (TVLV…SNVL), and 427-447 (VFDG…VMTT).

The protein belongs to the HAK/KUP transporter (TC 2.A.72) family.

The protein localises to the cell inner membrane. It carries out the reaction K(+)(in) + H(+)(in) = K(+)(out) + H(+)(out). Functionally, transport of potassium into the cell. Likely operates as a K(+):H(+) symporter. The polypeptide is Probable potassium transport system protein Kup (Acidiphilium cryptum (strain JF-5)).